The chain runs to 280 residues: Energy-coupling factor transporter ATP-binding protein EcfA2 (280 aa).

The 243-residue stretch at 3 to 245 (IEFKNVSYTY…VELLESKQLG (243 aa)) folds into the ABC transporter domain. 40 to 47 (GHTGSGKS) provides a ligand contact to ATP.

It belongs to the ABC transporter superfamily. Energy-coupling factor EcfA family. In terms of assembly, forms a stable energy-coupling factor (ECF) transporter complex composed of 2 membrane-embedded substrate-binding proteins (S component), 2 ATP-binding proteins (A component) and 2 transmembrane proteins (T component).

The protein localises to the cell membrane. Functionally, ATP-binding (A) component of a common energy-coupling factor (ECF) ABC-transporter complex. Unlike classic ABC transporters this ECF transporter provides the energy necessary to transport a number of different substrates. The protein is Energy-coupling factor transporter ATP-binding protein EcfA2 of Streptococcus agalactiae serotype Ia (strain ATCC 27591 / A909 / CDC SS700).